Consider the following 346-residue polypeptide: Glycosyltransferase 1 domain-containing protein 1 (346 aa).

Residues 1-16 (MRLLFLAVLRPHTGNA) form the signal peptide.

The protein belongs to the glycosyltransferase group 1 family. Glycosyltransferase 4 subfamily.

It is found in the secreted. The polypeptide is Glycosyltransferase 1 domain-containing protein 1 (GLT1D1) (Pongo abelii (Sumatran orangutan)).